We begin with the raw amino-acid sequence, 432 residues long: Adenosylhomocysteinase (432 aa).

Positions 1–24 (MSAYSPLSAQLDADTDVDVESTRT) are disordered. Substrate contacts are provided by Asp-137 and Glu-162. An NAD(+)-binding site is contributed by 163–165 (TTT). Residues Lys-192 and Asp-196 each contribute to the substrate site. Residues Asn-197, 226-231 (GYGYCG), Glu-249, Asn-284, 305-307 (AGH), and Asn-352 contribute to the NAD(+) site.

It belongs to the adenosylhomocysteinase family. It depends on NAD(+) as a cofactor.

The protein resides in the cytoplasm. It carries out the reaction S-adenosyl-L-homocysteine + H2O = L-homocysteine + adenosine. The protein operates within amino-acid biosynthesis; L-homocysteine biosynthesis; L-homocysteine from S-adenosyl-L-homocysteine: step 1/1. Its function is as follows. May play a key role in the regulation of the intracellular concentration of adenosylhomocysteine. The chain is Adenosylhomocysteinase from Haloquadratum walsbyi (strain DSM 16854 / JCM 12705 / C23).